The following is a 132-amino-acid chain: Large ribosomal subunit protein bL12 (132 aa).

This sequence belongs to the bacterial ribosomal protein bL12 family. Homodimer. Part of the ribosomal stalk of the 50S ribosomal subunit. Forms a multimeric L10(L12)X complex, where L10 forms an elongated spine to which 2 to 4 L12 dimers bind in a sequential fashion. Binds GTP-bound translation factors.

Its function is as follows. Forms part of the ribosomal stalk which helps the ribosome interact with GTP-bound translation factors. Is thus essential for accurate translation. The protein is Large ribosomal subunit protein bL12 of Prochlorococcus marinus (strain MIT 9211).